A 445-amino-acid chain; its full sequence is GTPase Der (445 aa).

EngA-type G domains are found at residues 3-167 and 180-353; these read PVIA…NLPD and IKLA…ASAN. GTP-binding positions include 9 to 16, 56 to 60, 119 to 122, 186 to 193, 233 to 237, and 298 to 301; these read GRPNVGKS, DTGGF, NKAE, DTAGL, and NKWD. The region spanning 354 to 438 is the KH-like domain; it reads RKMSTPVLTR…PLRIQLKSSV (85 aa).

It belongs to the TRAFAC class TrmE-Era-EngA-EngB-Septin-like GTPase superfamily. EngA (Der) GTPase family. In terms of assembly, associates with the 50S ribosomal subunit.

In terms of biological role, GTPase that plays an essential role in the late steps of ribosome biogenesis. The polypeptide is GTPase Der (Polaromonas naphthalenivorans (strain CJ2)).